Consider the following 165-residue polypeptide: MIRQVITSYFLTVCLLALVQGETVQDCENKLPTSLKSRLCEIRRYEIIEGPEMDKHIHCVMRALDFVYEDGRGDYHKLYDPLNIIELDKRHDVNLEKCIGECVQVPTSERAHVFYKCLLKSTTGRTFKKVFDLMELKQAGKVPQHQRYTAEFVQIMKDYDKALNC.

A signal peptide spans 1-21; sequence MIRQVITSYFLTVCLLALVQG. Intrachain disulfides connect C27/C59, C40/C165, and C98/C117. Noradrenaline contacts are provided by E28 and R43. E28 serves as a coordination point for serotonin. Serotonin is bound by residues H56, Y115, D132, and E135. 3 residues coordinate histamine: Y115, D132, and E135. Residues Y115, D132, and E135 each coordinate tryptamine. Noradrenaline-binding residues include D132 and E135.

The protein belongs to the PBP/GOBP family. Female saliva (at protein level). Female salivary gland. Not detected in female carcass without salivary glands. Not detected in male tissues.

The protein resides in the secreted. Its function is as follows. Modulates blood feeding of female mosquitoes on vertebrate species by binding and sequestering different mediators involved in the host response. Binds serotonin, noradrenaline, histamine and tryptamine. Inhibits histamine-, serotonin- and partially noradrenaline-induced smooth muscle contraction. Exhibits vasodilating activity. The protein is Short form salivary protein D7R4 of Anopheles gambiae (African malaria mosquito).